An 867-amino-acid polypeptide reads, in one-letter code: Dynamin-1 (867 aa).

A Dynamin-type G domain is found at 28–294 (DLDLPQIAVV…LTNHIRDTLP (267 aa)). The interval 38-45 (GGQSAGKS) is G1 motif. Residues Ser41, Gly43, Lys44, Ser45, Ser46, Arg59, and Gly60 each coordinate GDP. A G2 motif region spans residues 64-66 (VTR). Tyr80 carries the phosphotyrosine modification. 3'-nitrotyrosine; alternate is present on Tyr125. Position 125 is a phosphotyrosine; alternate (Tyr125). Residues 136 to 139 (DLPG) are G3 motif. The G4 motif stretch occupies residues 205 to 208 (TKLD). Residues Lys206, Asp208, Asp211, Asn236, Arg237, and Gln239 each contribute to the GDP site. A G5 motif region spans residues 235 to 238 (VNRS). Phosphoserine occurs at positions 306 and 347. Phosphotyrosine is present on Tyr354. A Phosphoserine modification is found at Ser512. The PH domain occupies 515 to 625 (QDEILVIRKG…WKASFLRAGV (111 aa)). One can recognise a GED domain in the interval 659 to 750 (VETIRNLVDS…IIGDINTTTV (92 aa)). Positions 767-867 (SVPAGRRSPT…HENRAGKARL (101 aa)) are disordered. Residues Ser774 and Ser778 each carry the phosphoserine modification. Arg796 carries the post-translational modification Omega-N-methylarginine. A Phosphoserine modification is found at Ser822. The segment covering 825–843 (PFGPPPQVPSRPNRAPPGV) has biased composition (pro residues). 3 positions are modified to phosphoserine: Gly847, Leu851, and Lys857. Over residues 856–867 (GKHENRAGKARL) the composition is skewed to basic and acidic residues.

It belongs to the TRAFAC class dynamin-like GTPase superfamily. Dynamin/Fzo/YdjA family. Homodimer; homodimerization is mediated by the dynamin-type G domain which promotes assembly-stimulated GTPase activity. Homo-tetramer formed from two dimers in the absence of lipid. Oligomerizes into a helical polymer that self-assembles around the vesicle membrane, when associated to the menbrane through lipid binding. Interacts (via C-terminal proline-rich domain (PRD)) with SNX9 (via SH3 domain); this interaction allows regulation of DNM1 self-assembly during late stages of endocytic vesicle formation and supports DNM1's early functions in accelerating clathrin-coated pits (CCPs) maturation in non neuronals cell. Interacts (via C-terminal proline-rich domain (PRD)) with MYO1E (via SH3 domain); this interaction regulates receptor-mediated endocytosis. Interacts with SNX33 (via SH3 domain); this interaction decreases DNM1-dependent endocytosis. Interacts with DIAPH1. Interacts with GRB2 (via SH3 domain); this interaction mediates disassembly of DNM1 polymers, therefore modulates self-assembly. Forms a complex with BIN1 (via SH3 domain) and SH3GL2 (via SH3 domain). Forms a complex with SH3GL2 (via SH3 domain) and AMPH (via SH3 domain). Forms a complex with SH3GL2 (via SH3 domain) and SYNJ1. Interacts (via C-terminal proline-rich domain (PRD)) with SYT1; this interaction facilitates vesicle fission during clathrin-mediated endocytosis (CME). Interacts (via C-terminal proline-rich domain (PRD)) with PLCG1 (via SH3 domain); this interaction stimulates the release of GDP from DNM1 and enhances DNM1-dependent endocytosis. Interacts with SNPH; this interaction inhibits the binding of DNM1 to AMPH and DNM1-receptor-mediated endocytosis. Interacts with CAV1. Interacts with SH3GLB1 (via SH3 domain). Interacts with PACSIN1 (via SH3 domain), PACSIN2 (via SH3 domain) and PACSIN3 (via SH3 domain). Interacts with UNC119; this interaction decreases DNM1's GTPase activity and affects DNM1's interaction with AMPH. Interacts with AMPH. Interacts (GTP-bound form) with DNAJC6; this interaction allows clathrin-coated vesicle (CCV) formation at the plasma membrane. In terms of processing, phosphorylation at Ser-774 by GSK3B/GSK3-beta leads to inactivation of receptor-mediated endocytosis in non-neuronal cells. Dephosphorylation at Ser-774, through the EGFR downstream signaling, leads to activation and regulates early stages of clathrin-mediated endocytosis (CME). Phosphorylated on Tyr in response to EGF stimulation in cells expressing truncated EGFR. Phosphorylated by CDK5 leading to synaptic vesicle endocytosis (SVE) activation. As to expression, expressed exclusively in the brain.

The protein localises to the cell membrane. It localises to the membrane. It is found in the clathrin-coated pit. Its subcellular location is the cytoplasmic vesicle. The protein resides in the presynapse. The protein localises to the secretory vesicle. It localises to the chromaffin granule. The enzyme catalyses GTP + H2O = GDP + phosphate + H(+). Functionally, catalyzes the hydrolysis of GTP and utilizes this energy to mediate vesicle scission and participates in many forms of endocytosis, such as clathrin-mediated endocytosis or synaptic vesicle endocytosis as well as rapid endocytosis (RE). Associates to the membrane, through lipid binding, and self-assembles into rings and stacks of interconnected rings through oligomerization to form a helical polymer around the vesicle membrane leading to constriction of invaginated coated pits around their necks. Self-assembly of the helical polymer induces membrane tubules narrowing until the polymer reaches a length sufficient to trigger GTP hydrolysis. Depending on the curvature imposed on the tubules, membrane detachment from the helical polymer upon GTP hydrolysis can cause spontaneous hemifission followed by complete fission. May play a role in regulating early stages of clathrin-mediated endocytosis in non-neuronal cells through its activation by dephosphorylation via the signaling downstream of EGFR. Controls vesicle size at a step before fission, during formation of membrane pits, at hippocampal synapses. Controls plastic adaptation of the synaptic vesicle recycling machinery to high levels of activity. Mediates rapid endocytosis (RE), a Ca(2+)-dependent and clathrin- and K(+)-independent process in chromaffin cells. Microtubule-associated force-producing protein involved in producing microtubule bundles and able to bind and hydrolyze GTP. Through its interaction with DNAJC6, acts during the early steps of clathrin-coated vesicle (CCV) formation. The chain is Dynamin-1 from Mus musculus (Mouse).